The chain runs to 375 residues: Protein RecA (375 aa).

A disordered region spans residues 1–20 (MPAEMKSAASGSDPRSSGER). An ATP-binding site is contributed by 79–86 (GPESSGKT).

Belongs to the RecA family.

Its subcellular location is the cytoplasm. Functionally, can catalyze the hydrolysis of ATP in the presence of single-stranded DNA, the ATP-dependent uptake of single-stranded DNA by duplex DNA, and the ATP-dependent hybridization of homologous single-stranded DNAs. It interacts with LexA causing its activation and leading to its autocatalytic cleavage. The polypeptide is Protein RecA (Parasynechococcus marenigrum (strain WH8102)).